The primary structure comprises 239 residues: Ribonuclease PH (239 aa).

Phosphate is bound by residues R86 and 124–126 (GTR).

Belongs to the RNase PH family. As to quaternary structure, homohexameric ring arranged as a trimer of dimers.

The enzyme catalyses tRNA(n+1) + phosphate = tRNA(n) + a ribonucleoside 5'-diphosphate. Phosphorolytic 3'-5' exoribonuclease that plays an important role in tRNA 3'-end maturation. Removes nucleotide residues following the 3'-CCA terminus of tRNAs; can also add nucleotides to the ends of RNA molecules by using nucleoside diphosphates as substrates, but this may not be physiologically important. Probably plays a role in initiation of 16S rRNA degradation (leading to ribosome degradation) during starvation. The sequence is that of Ribonuclease PH from Rhodopseudomonas palustris (strain BisB18).